A 91-amino-acid polypeptide reads, in one-letter code: Sec-independent protein translocase protein TatA (91 aa).

The helical transmembrane segment at 1 to 21 threads the bilayer; it reads MGIFDWKHWIVILIVVVLVFG. Residues 42 to 91 form a disordered region; the sequence is AMNDDDKPAEQPAPQPQQAQAAPQGSPLNQPHTIDAQAHKVDEPIRKDQV. The segment covering 51–65 has biased composition (low complexity); it reads EQPAPQPQQAQAAPQ. The span at 78–91 shows a compositional bias: basic and acidic residues; that stretch reads QAHKVDEPIRKDQV.

The protein belongs to the TatA/E family. As to quaternary structure, the Tat system comprises two distinct complexes: a TatABC complex, containing multiple copies of TatA, TatB and TatC subunits, and a separate TatA complex, containing only TatA subunits. Substrates initially bind to the TatABC complex, which probably triggers association of the separate TatA complex to form the active translocon.

The protein resides in the cell inner membrane. Functionally, part of the twin-arginine translocation (Tat) system that transports large folded proteins containing a characteristic twin-arginine motif in their signal peptide across membranes. TatA could form the protein-conducting channel of the Tat system. The chain is Sec-independent protein translocase protein TatA from Pseudomonas savastanoi pv. phaseolicola (strain 1448A / Race 6) (Pseudomonas syringae pv. phaseolicola (strain 1448A / Race 6)).